Consider the following 367-residue polypeptide: Peptide chain release factor 2 (367 aa).

Gln254 carries the N5-methylglutamine modification.

Belongs to the prokaryotic/mitochondrial release factor family. Post-translationally, methylated by PrmC. Methylation increases the termination efficiency of RF2.

It localises to the cytoplasm. Functionally, peptide chain release factor 2 directs the termination of translation in response to the peptide chain termination codons UGA and UAA. The protein is Peptide chain release factor 2 of Aromatoleum aromaticum (strain DSM 19018 / LMG 30748 / EbN1) (Azoarcus sp. (strain EbN1)).